Reading from the N-terminus, the 1366-residue chain is DNA-directed RNA polymerase subunit beta (1366 aa).

Belongs to the RNA polymerase beta chain family. The RNAP catalytic core consists of 2 alpha, 1 beta, 1 beta' and 1 omega subunit. When a sigma factor is associated with the core the holoenzyme is formed, which can initiate transcription.

The catalysed reaction is RNA(n) + a ribonucleoside 5'-triphosphate = RNA(n+1) + diphosphate. DNA-dependent RNA polymerase catalyzes the transcription of DNA into RNA using the four ribonucleoside triphosphates as substrates. This is DNA-directed RNA polymerase subunit beta from Marinomonas sp. (strain MWYL1).